The sequence spans 180 residues: Translation initiation factor IF-3 (180 aa).

Belongs to the IF-3 family. In terms of assembly, monomer.

It localises to the cytoplasm. IF-3 binds to the 30S ribosomal subunit and shifts the equilibrium between 70S ribosomes and their 50S and 30S subunits in favor of the free subunits, thus enhancing the availability of 30S subunits on which protein synthesis initiation begins. The sequence is that of Translation initiation factor IF-3 from Pasteurella multocida (strain Pm70).